Consider the following 107-residue polypeptide: Prepilin peptidase-dependent protein C (107 aa).

Residues 1-10 (MSASLKNQQG) constitute a propeptide that is removed on maturation. The residue at position 11 (phenylalanine 11) is an N-methylphenylalanine. The chain crosses the membrane as a helical span at residues 11-30 (FSLPEVMLAMVLMVMIVTAL).

It localises to the membrane. Not yet known. The protein is Prepilin peptidase-dependent protein C (ppdC) of Escherichia coli (strain K12).